Here is a 166-residue protein sequence, read N- to C-terminus: Large ribosomal subunit protein uL10 (166 aa).

Belongs to the universal ribosomal protein uL10 family. In terms of assembly, part of the ribosomal stalk of the 50S ribosomal subunit. The N-terminus interacts with L11 and the large rRNA to form the base of the stalk. The C-terminus forms an elongated spine to which L12 dimers bind in a sequential fashion forming a multimeric L10(L12)X complex.

Forms part of the ribosomal stalk, playing a central role in the interaction of the ribosome with GTP-bound translation factors. In Ectopseudomonas mendocina (strain ymp) (Pseudomonas mendocina), this protein is Large ribosomal subunit protein uL10.